Reading from the N-terminus, the 441-residue chain is E3 ubiquitin-protein ligase APD1 (441 aa).

A run of 2 helical transmembrane segments spans residues 60–80 (SNLY…FILI) and 305–325 (IAYV…IQFC). The segment at 390–429 (CAICFDVPRDCFFLPCGHSVSCYECGTTMQEADGSCPICR) adopts an RING-type zinc-finger fold.

As to expression, expressed in the shoot apical meristems (SAM), root tips and inflorescences, and, at low levels, in floral buds and pollen.

Its subcellular location is the endomembrane system. It is found in the vacuole membrane. It carries out the reaction S-ubiquitinyl-[E2 ubiquitin-conjugating enzyme]-L-cysteine + [acceptor protein]-L-lysine = [E2 ubiquitin-conjugating enzyme]-L-cysteine + N(6)-ubiquitinyl-[acceptor protein]-L-lysine.. Its pathway is protein modification; protein ubiquitination. Involved in pollen mitosis II (PMII) regulation during male gametogenesis. The sequence is that of E3 ubiquitin-protein ligase APD1 from Arabidopsis thaliana (Mouse-ear cress).